Here is a 280-residue protein sequence, read N- to C-terminus: Bifunctional protein FolD (280 aa).

NADP(+) is bound by residues 164–166, Ser189, and Val230; that span reads GRS.

It belongs to the tetrahydrofolate dehydrogenase/cyclohydrolase family. In terms of assembly, homodimer.

The enzyme catalyses (6R)-5,10-methylene-5,6,7,8-tetrahydrofolate + NADP(+) = (6R)-5,10-methenyltetrahydrofolate + NADPH. The catalysed reaction is (6R)-5,10-methenyltetrahydrofolate + H2O = (6R)-10-formyltetrahydrofolate + H(+). Its pathway is one-carbon metabolism; tetrahydrofolate interconversion. In terms of biological role, catalyzes the oxidation of 5,10-methylenetetrahydrofolate to 5,10-methenyltetrahydrofolate and then the hydrolysis of 5,10-methenyltetrahydrofolate to 10-formyltetrahydrofolate. The polypeptide is Bifunctional protein FolD (Geotalea daltonii (strain DSM 22248 / JCM 15807 / FRC-32) (Geobacter daltonii)).